The following is a 452-amino-acid chain: Pup--protein ligase (452 aa).

Glu9 contributes to the Mg(2+) binding site. Arg53 is an ATP binding site. Tyr55 provides a ligand contact to Mg(2+). The Proton acceptor role is filled by Asp57. Glu63 provides a ligand contact to Mg(2+). Positions 66 and 419 each coordinate ATP.

It belongs to the Pup ligase/Pup deamidase family. Pup-conjugating enzyme subfamily.

The enzyme catalyses ATP + [prokaryotic ubiquitin-like protein]-L-glutamate + [protein]-L-lysine = ADP + phosphate + N(6)-([prokaryotic ubiquitin-like protein]-gamma-L-glutamyl)-[protein]-L-lysine.. It participates in protein degradation; proteasomal Pup-dependent pathway. Its pathway is protein modification; protein pupylation. Functionally, catalyzes the covalent attachment of the prokaryotic ubiquitin-like protein modifier Pup to the proteasomal substrate proteins, thereby targeting them for proteasomal degradation. This tagging system is termed pupylation. The ligation reaction involves the side-chain carboxylate of the C-terminal glutamate of Pup and the side-chain amino group of a substrate lysine. The chain is Pup--protein ligase from Rhodococcus erythropolis (strain PR4 / NBRC 100887).